The primary structure comprises 438 residues: MSQANAATKASSDVFFNASLEDIDPEIFGAIRNELGRQRHEIELIASENIVSRAVLEAQGSILTNKYAEGYPGKRYYGGCQYVDVVEELAIERAKKLFGAEFANVQPNSGSQMNQAVFLALLQPGDTFMGLDLNSGGHLTHGSPVNMSGKWFNVVSYGVRKDDHLLDMDEVARLARENKPKLILAGGTAYSRIWDWKRFREIADEVGAYLMVDMAHIAGLVAGGQHPSPVPHAHVCTTTTHKSLRGPRGGMILTNDADIAKKINSAVFPGLQGGPLMHVIAGKAVAFAEALKPEFKLYAKNVVDNARALAEELKSHGLDIVSGGTDNHLMLVDLRPKNATGKRAEAALGRANITCNKNGIPFDPEKPFVTSGVRLGTPAGTTRGFGVAEFKEIGSLIAEVLDGLKVANSDEGNAAVEQAVKEKVIALTGRFPMYGYQG.

(6S)-5,6,7,8-tetrahydrofolate contacts are provided by residues Leu-133 and 137–139; that span reads GHL. N6-(pyridoxal phosphate)lysine is present on Lys-242.

This sequence belongs to the SHMT family. In terms of assembly, homodimer. Pyridoxal 5'-phosphate serves as cofactor.

The protein resides in the cytoplasm. The enzyme catalyses (6R)-5,10-methylene-5,6,7,8-tetrahydrofolate + glycine + H2O = (6S)-5,6,7,8-tetrahydrofolate + L-serine. It functions in the pathway one-carbon metabolism; tetrahydrofolate interconversion. The protein operates within amino-acid biosynthesis; glycine biosynthesis; glycine from L-serine: step 1/1. Functionally, catalyzes the reversible interconversion of serine and glycine with tetrahydrofolate (THF) serving as the one-carbon carrier. This reaction serves as the major source of one-carbon groups required for the biosynthesis of purines, thymidylate, methionine, and other important biomolecules. Also exhibits THF-independent aldolase activity toward beta-hydroxyamino acids, producing glycine and aldehydes, via a retro-aldol mechanism. This chain is Serine hydroxymethyltransferase, found in Brucella melitensis biotype 2 (strain ATCC 23457).